A 299-amino-acid polypeptide reads, in one-letter code: RING-H2 finger protein ATL20 (299 aa).

A helical membrane pass occupies residues 172 to 192 (LIITLCIIGGITATCIAAIRI). Residues 253 to 295 (CPICLSEYASKETVRCMPECDHCFHVQCIDEWLKIHSSCPVCR) form an RING-type; atypical zinc finger.

This sequence belongs to the RING-type zinc finger family. ATL subfamily.

It localises to the membrane. It carries out the reaction S-ubiquitinyl-[E2 ubiquitin-conjugating enzyme]-L-cysteine + [acceptor protein]-L-lysine = [E2 ubiquitin-conjugating enzyme]-L-cysteine + N(6)-ubiquitinyl-[acceptor protein]-L-lysine.. It functions in the pathway protein modification; protein ubiquitination. This Arabidopsis thaliana (Mouse-ear cress) protein is RING-H2 finger protein ATL20 (ATL20).